Here is a 52-residue protein sequence, read N- to C-terminus: Phospholamban (52 aa).

An N-acetylmethionine modification is found at M1. The Cytoplasmic segment spans residues 1 to 31 (MEKVQYITRSALRRASTLEVNPQARQRLQEL). At S16 the chain carries Phosphoserine; by PKA. T17 carries the post-translational modification Phosphothreonine; by CaMK. The chain crosses the membrane as a helical span at residues 32–52 (FVNFCLILICLLLICIIVMLL).

Belongs to the phospholamban family. In terms of assembly, homopentamer. In terms of processing, phosphorylated in response to beta-adrenergic stimulation. Phosphorylation by PKA abolishes the inhibition of ATP2A2-mediated calcium uptake. In terms of tissue distribution, heart.

The protein localises to the endoplasmic reticulum membrane. It localises to the sarcoplasmic reticulum membrane. The protein resides in the mitochondrion membrane. Its subcellular location is the membrane. In terms of biological role, reversibly inhibits the activity of ATP2A2/SERCA2 in cardiac sarcoplasmic reticulum by decreasing the apparent affinity of the ATPase for Ca(2+). Binds preferentially to the ATP-bound E1 conformational form of ATP2A2 which predominates at low Ca(2+) concentrations during the diastolic phase of the cardiac cycle. Inhibits ATP2A2 Ca(2+) affinity by disrupting its allosteric activation by ATP. Modulates the contractility of the heart muscle in response to physiological stimuli via its effects on ATP2A2. Modulates calcium re-uptake during muscle relaxation and plays an important role in calcium homeostasis in the heart muscle. The degree of ATP2A2 inhibition depends on the oligomeric state of PLN. ATP2A2 inhibition is alleviated by PLN phosphorylation. In Gallus gallus (Chicken), this protein is Phospholamban (PLN).